We begin with the raw amino-acid sequence, 238 residues long: uncharacterized protein (238 aa).

Residues 1–19 (MKINLFFVFLFELLHFVAA) form the signal peptide. Over 20-197 (YSCEGDESAA…LALYGHLSQK (178 aa)) the chain is Lumenal. A helical transmembrane segment spans residues 198–216 (YTPLGMNVAIFGISAYIMY). The Cytoplasmic portion of the chain corresponds to 217–238 (RSSKKAKQKQAAAAAAAAAKKK).

It localises to the endoplasmic reticulum membrane. This is an uncharacterized protein from Schizosaccharomyces pombe (strain 972 / ATCC 24843) (Fission yeast).